The primary structure comprises 138 residues: Small ribosomal subunit protein uS11 (138 aa).

A compositionally biased stretch (low complexity) spans 1 to 12 (MAPKKPGAAGPK). Disordered stretches follow at residues 1 to 27 (MAPK…NVPH) and 119 to 138 (ISDV…RRRV). Residues 13–22 (KAQKTRRREK) show a composition bias toward basic residues.

The protein belongs to the universal ribosomal protein uS11 family. Part of the 30S ribosomal subunit. Interacts with proteins S7 and S18. Binds to IF-3.

Functionally, located on the platform of the 30S subunit, it bridges several disparate RNA helices of the 16S rRNA. Forms part of the Shine-Dalgarno cleft in the 70S ribosome. This Mycobacteroides abscessus (strain ATCC 19977 / DSM 44196 / CCUG 20993 / CIP 104536 / JCM 13569 / NCTC 13031 / TMC 1543 / L948) (Mycobacterium abscessus) protein is Small ribosomal subunit protein uS11.